Consider the following 194-residue polypeptide: Early growth response protein 1 (194 aa).

3 consecutive C2H2-type zinc fingers follow at residues 1–18 (CDRRFSRSDELTRHIRIH), 24–46 (FQCRICMRNFSRSDHLTTHIRTH), and 52–74 (FACDICGRKFARSDERKRHTKIH). The interval 66–88 (ERKRHTKIHLRQKDKKVEKAASV) is disordered. The span at 69–79 (RHTKIHLRQKD) shows a compositional bias: basic residues.

This sequence belongs to the EGR C2H2-type zinc-finger protein family.

It localises to the nucleus. The protein resides in the cytoplasm. Its function is as follows. Transcriptional regulator. Recognizes and binds to the DNA sequence 5'-GCG(T/G)GGGCG-3'(EGR-site) in the promoter region of target genes. Binds double-stranded target DNA, irrespective of the cytosine methylation status. Regulates the transcription of numerous target genes, and thereby plays an important role in regulating the response to growth factors, DNA damage, and ischemia. Plays a role in the regulation of cell survival, proliferation and cell death. Mediates responses to ischemia and hypoxia; regulates the expression of proteins that are involved in inflammatory processes. Plays a role in regulating the expression of circadian clock genes. This Coturnix japonica (Japanese quail) protein is Early growth response protein 1 (EGR1).